Here is a 317-residue protein sequence, read N- to C-terminus: Proline iminopeptidase (317 aa).

Positions 41–296 (VFIHGGPGGG…ELHIVEGAGH (256 aa)) constitute an AB hydrolase-1 domain. S113 (nucleophile) is an active-site residue. D268 is a catalytic residue. The active-site Proton donor is H296.

Belongs to the peptidase S33 family. As to quaternary structure, monomer.

It is found in the cytoplasm. It carries out the reaction Release of N-terminal proline from a peptide.. Its function is as follows. Specifically catalyzes the removal of N-terminal proline residues from peptides. The chain is Proline iminopeptidase (pip) from Serratia marcescens.